Reading from the N-terminus, the 707-residue chain is Golgin candidate 1 (707 aa).

Over 1-664 (MASWLKAAED…RATRFLWRYP (664 aa)) the chain is Cytoplasmic. 3 disordered regions span residues 22 to 106 (VVED…EIHP), 121 to 196 (VADT…SKRD), and 234 to 256 (QEPKVPVTSTNLKREQDRRADTT). Low complexity predominate over residues 38-47 (SGRKGSQGKR). Over residues 56–67 (VKEESSNKRDSS) the composition is skewed to basic and acidic residues. A compositionally biased stretch (polar residues) spans 68 to 80 (GDQSGPGVSQSEV). Over residues 83-95 (SKSSVSTDETSSS) the composition is skewed to low complexity. 3 stretches are compositionally biased toward basic and acidic residues: residues 139 to 150 (DGDRSESKHADG), 185 to 196 (TQRELDDSSKRD), and 245 to 254 (LKREQDRRAD). Coiled-coil stretches lie at residues 287–424 (RVCA…NATK) and 452–608 (ADER…KSRV). A helical; Signal-anchor for type II membrane protein transmembrane segment spans residues 665–685 (IARMFLLFYLVFVHLFLMYLI). The Lumenal segment spans residues 686 to 707 (HRLQEQAEAQEVAAMTNNVFRL).

The protein localises to the golgi apparatus membrane. Functionally, golgi matrix protein playing a role in tethering of vesicles to Golgi membranes and in maintaining the overall structure of the Golgi apparatus. This is Golgin candidate 1 (GC1) from Arabidopsis thaliana (Mouse-ear cress).